The following is a 195-amino-acid chain: MSSIKLIVGLANPGAEYAATRHNAGAWFVDRLADAYRQPLKEESKFFGYTSRLNLAGQDVRLLVPTTFMNLSGKAVAAMATFYRIQPDEILVAHDELDLLPGIAKLKLGGGHGGHNGLKDIISKLGNNPNFHRLRIGIGHPGDKSKVTGFVLGKPPTSEQTLIDDAIDEAVRCTEILMKEDMIKAMNRLHAFKPA.

Position 17 (Tyr-17) interacts with tRNA. The active-site Proton acceptor is His-22. TRNA contacts are provided by Phe-68, Asn-70, and Asn-116.

Belongs to the PTH family. As to quaternary structure, monomer.

The protein localises to the cytoplasm. The enzyme catalyses an N-acyl-L-alpha-aminoacyl-tRNA + H2O = an N-acyl-L-amino acid + a tRNA + H(+). Its function is as follows. Hydrolyzes ribosome-free peptidyl-tRNAs (with 1 or more amino acids incorporated), which drop off the ribosome during protein synthesis, or as a result of ribosome stalling. Catalyzes the release of premature peptidyl moieties from peptidyl-tRNA molecules trapped in stalled 50S ribosomal subunits, and thus maintains levels of free tRNAs and 50S ribosomes. The polypeptide is Peptidyl-tRNA hydrolase (Pectobacterium carotovorum subsp. carotovorum (strain PC1)).